The primary structure comprises 2336 residues: RNA1 polyprotein (2336 aa).

Topologically, residues 599–1210 (QVARIARNIF…YLKEHGLEVL (612 aa)) are cytoplasmic. One can recognise an SF3 helicase domain in the interval 797 to 964 (MKDLLDLQQR…PGVVFDPMDC (168 aa)). 827 to 834 (GPSHCGKS) provides a ligand contact to ATP. Residues 1211-1231 (LLLAAMMILCVALYYFVGAFI) form a helical membrane-spanning segment. Over 1232–1253 (GVMGGALSMGAAMAGLKEVDMK) the chain is Lumenal. A Peptidase C3 domain is found at 1278–1486 (YARGELDEEV…WADNLPNPCM (209 aa)). Catalysis depends on for picornain 3C-like protease activity residues histidine 1320, glutamate 1358, and cysteine 1450. Residues 1771–1899 (DRAINCDYSS…SCTDKIAIYF (129 aa)) form the RdRp catalytic domain.

This sequence belongs to the nepoviruses RNA1 polyprotein family. Post-translationally, specific enzymatic cleavages by picornain 3C-like protease in vivo yield mature proteins. Picornain 3C-like protease is autocatalytically processed. In terms of processing, VPg is uridylylated by the polymerase and is covalently linked to the 5'-end of genomic RNA. This uridylylated form acts as a nucleotide-peptide primer for the polymerase.

The protein localises to the host endoplasmic reticulum lumen. Its subcellular location is the host endoplasmic reticulum membrane. It catalyses the reaction RNA(n) + a ribonucleoside 5'-triphosphate = RNA(n+1) + diphosphate. Picornain 3C-like protease is a thiol protease that cleaves the P1 and P2 polyproteins. The chain is RNA1 polyprotein from Cycas necrotic stunt virus (CNSV).